Consider the following 551-residue polypeptide: Hydroxymethylpyrimidine/phosphomethylpyrimidine kinase THI20 (551 aa).

Glutamine 64 is a 4-amino-5-hydroxymethyl-2-methylpyrimidine binding site. Cysteine 468 (nucleophile) is an active-site residue. Catalysis depends on glutamate 540, which acts as the Proton donor.

In the N-terminal section; belongs to the ThiD family. The protein in the C-terminal section; belongs to the thiaminase-2 family.

The catalysed reaction is 4-amino-5-hydroxymethyl-2-methylpyrimidine + ATP = 4-amino-2-methyl-5-(phosphooxymethyl)pyrimidine + ADP + H(+). It catalyses the reaction 4-amino-2-methyl-5-(phosphooxymethyl)pyrimidine + ATP = 4-amino-2-methyl-5-(diphosphooxymethyl)pyrimidine + ADP. It carries out the reaction thiamine + H2O = 5-(2-hydroxyethyl)-4-methylthiazole + 4-amino-5-hydroxymethyl-2-methylpyrimidine + H(+). Its pathway is cofactor biosynthesis; thiamine diphosphate biosynthesis; 4-amino-2-methyl-5-diphosphomethylpyrimidine from 5-amino-1-(5-phospho-D-ribosyl)imidazole: step 2/3. It participates in cofactor biosynthesis; thiamine diphosphate biosynthesis; 4-amino-2-methyl-5-diphosphomethylpyrimidine from 5-amino-1-(5-phospho-D-ribosyl)imidazole: step 3/3. Functionally, trifunctional protein with both thiamine biosynthetic and degradative activity. Within the thiamine biosynthesis pathway, catalyzes the phosphorylation of hydroxymethylpyrimidine (HMP) to hydroxymethylpyrimidine phosphate (HMP-P), as well as of HMP-P to HMP-PP. Also has thiaminase II activity and degrades thiamine using water as the nucleophile, resulting only in the formation of HMP (4-amino-2-methyl-5-hydroxymethylpyrimidine) and Thz (4-methyl-5-thiazole ethanol). The polypeptide is Hydroxymethylpyrimidine/phosphomethylpyrimidine kinase THI20 (Saccharomyces cerevisiae (strain ATCC 204508 / S288c) (Baker's yeast)).